The primary structure comprises 66 residues: UPF0337 protein spyM18_1212 (66 aa).

It belongs to the UPF0337 (CsbD) family.

The sequence is that of UPF0337 protein spyM18_1212 from Streptococcus pyogenes serotype M18 (strain MGAS8232).